Here is a 435-residue protein sequence, read N- to C-terminus: Adenylosuccinate synthetase (435 aa).

GTP-binding positions include 22 to 28 (GDEGKGK) and 50 to 52 (GHT). The Proton acceptor role is filled by Asp23. Mg(2+) is bound by residues Asp23 and Gly50. IMP-binding positions include 23-26 (DEGK), 48-51 (NAGH), Thr140, Arg154, Gln235, Thr250, and Arg314. His51 serves as the catalytic Proton donor. Substrate is bound at residue 310–316 (ATTGRKR). Residues Arg316, 342–344 (KLD), and 424–426 (SVG) each bind GTP.

It belongs to the adenylosuccinate synthetase family. Homodimer. The cofactor is Mg(2+).

Its subcellular location is the cytoplasm. The enzyme catalyses IMP + L-aspartate + GTP = N(6)-(1,2-dicarboxyethyl)-AMP + GDP + phosphate + 2 H(+). It functions in the pathway purine metabolism; AMP biosynthesis via de novo pathway; AMP from IMP: step 1/2. Plays an important role in the de novo pathway of purine nucleotide biosynthesis. Catalyzes the first committed step in the biosynthesis of AMP from IMP. This is Adenylosuccinate synthetase from Chlorobaculum tepidum (strain ATCC 49652 / DSM 12025 / NBRC 103806 / TLS) (Chlorobium tepidum).